A 236-amino-acid chain; its full sequence is 2-C-methyl-D-erythritol 4-phosphate cytidylyltransferase (236 aa).

This sequence belongs to the IspD/TarI cytidylyltransferase family. IspD subfamily. As to quaternary structure, homodimer.

The enzyme catalyses 2-C-methyl-D-erythritol 4-phosphate + CTP + H(+) = 4-CDP-2-C-methyl-D-erythritol + diphosphate. It participates in isoprenoid biosynthesis; isopentenyl diphosphate biosynthesis via DXP pathway; isopentenyl diphosphate from 1-deoxy-D-xylulose 5-phosphate: step 2/6. Functionally, catalyzes the formation of 4-diphosphocytidyl-2-C-methyl-D-erythritol from CTP and 2-C-methyl-D-erythritol 4-phosphate (MEP). The chain is 2-C-methyl-D-erythritol 4-phosphate cytidylyltransferase from Salmonella typhimurium (strain LT2 / SGSC1412 / ATCC 700720).